A 490-amino-acid polypeptide reads, in one-letter code: ATP synthase subunit beta, chloroplastic (490 aa).

170 to 177 (GGAGVGKT) is a binding site for ATP.

Belongs to the ATPase alpha/beta chains family. In terms of assembly, F-type ATPases have 2 components, CF(1) - the catalytic core - and CF(0) - the membrane proton channel. CF(1) has five subunits: alpha(3), beta(3), gamma(1), delta(1), epsilon(1). CF(0) has four main subunits: a(1), b(1), b'(1) and c(9-12).

Its subcellular location is the plastid. The protein localises to the chloroplast thylakoid membrane. The catalysed reaction is ATP + H2O + 4 H(+)(in) = ADP + phosphate + 5 H(+)(out). Functionally, produces ATP from ADP in the presence of a proton gradient across the membrane. The catalytic sites are hosted primarily by the beta subunits. This chain is ATP synthase subunit beta, chloroplastic, found in Ipomoea setosa (Brazilian morning glory).